The sequence spans 202 residues: Alpha-S1-casein (202 aa).

Disordered stretches follow at residues 1 to 25 (RPKLPHRHPEIIQNEQDSREKVLKE) and 51 to 84 (LKEKQKDEHKEYLIEDPEQQESSSTSSSEEVVPI). Composition is skewed to basic and acidic residues over residues 16–25 (QDSREKVLKE) and 51–63 (LKEKQKDEHKEYL). Ser18 carries the phosphoserine modification. The span at 70–80 (QESSSTSSSEE) shows a compositional bias: low complexity. Phosphoserine occurs at positions 72, 73, 74, 76, 77, and 78.

This sequence belongs to the alpha-casein family. In terms of tissue distribution, mammary gland specific. Secreted in milk.

It is found in the secreted. Important role in the capacity of milk to transport calcium phosphate. The chain is Alpha-S1-casein from Equus asinus (Donkey).